The following is a 375-amino-acid chain: Glutamate 5-kinase (375 aa).

K13 is an ATP binding site. Substrate is bound by residues S54, D141, and N153. ATP contacts are provided by residues 173–174 (TD) and 216–222 (TGGMATK). The PUA domain maps to 281 to 359 (TGKIFIDAGA…EAIAAVLGYV (79 aa)).

Belongs to the glutamate 5-kinase family.

The protein resides in the cytoplasm. It carries out the reaction L-glutamate + ATP = L-glutamyl 5-phosphate + ADP. It functions in the pathway amino-acid biosynthesis; L-proline biosynthesis; L-glutamate 5-semialdehyde from L-glutamate: step 1/2. Catalyzes the transfer of a phosphate group to glutamate to form L-glutamate 5-phosphate. The sequence is that of Glutamate 5-kinase from Synechocystis sp. (strain ATCC 27184 / PCC 6803 / Kazusa).